The sequence spans 505 residues: Lysine--tRNA ligase (505 aa).

Residues Glu415 and Glu422 each contribute to the Mg(2+) site.

This sequence belongs to the class-II aminoacyl-tRNA synthetase family. Homodimer. It depends on Mg(2+) as a cofactor.

The protein resides in the cytoplasm. It carries out the reaction tRNA(Lys) + L-lysine + ATP = L-lysyl-tRNA(Lys) + AMP + diphosphate. The chain is Lysine--tRNA ligase from Shigella boydii serotype 4 (strain Sb227).